Here is a 332-residue protein sequence, read N- to C-terminus: Ketol-acid reductoisomerase (NADP(+)) (332 aa).

One can recognise a KARI N-terminal Rossmann domain in the interval 1 to 182 (MATIYYEKDA…GCTRAGVLAT (182 aa)). NADP(+)-binding positions include 25 to 28 (YGSQ), arginine 48, serine 53, and 83 to 86 (DELQ). The active site involves histidine 108. Glycine 134 contacts NADP(+). The KARI C-terminal knotted domain occupies 183-328 (TFKEETETDL…KELRSMMPWL (146 aa)). Positions 191, 195, 227, and 231 each coordinate Mg(2+). Serine 252 contributes to the substrate binding site.

It belongs to the ketol-acid reductoisomerase family. It depends on Mg(2+) as a cofactor.

The enzyme catalyses (2R)-2,3-dihydroxy-3-methylbutanoate + NADP(+) = (2S)-2-acetolactate + NADPH + H(+). The catalysed reaction is (2R,3R)-2,3-dihydroxy-3-methylpentanoate + NADP(+) = (S)-2-ethyl-2-hydroxy-3-oxobutanoate + NADPH + H(+). Its pathway is amino-acid biosynthesis; L-isoleucine biosynthesis; L-isoleucine from 2-oxobutanoate: step 2/4. It functions in the pathway amino-acid biosynthesis; L-valine biosynthesis; L-valine from pyruvate: step 2/4. Involved in the biosynthesis of branched-chain amino acids (BCAA). Catalyzes an alkyl-migration followed by a ketol-acid reduction of (S)-2-acetolactate (S2AL) to yield (R)-2,3-dihydroxy-isovalerate. In the isomerase reaction, S2AL is rearranged via a Mg-dependent methyl migration to produce 3-hydroxy-3-methyl-2-ketobutyrate (HMKB). In the reductase reaction, this 2-ketoacid undergoes a metal-dependent reduction by NADPH to yield (R)-2,3-dihydroxy-isovalerate. The sequence is that of Ketol-acid reductoisomerase (NADP(+)) from Methanocella arvoryzae (strain DSM 22066 / NBRC 105507 / MRE50).